The sequence spans 142 residues: uncharacterized protein (142 aa).

Residues Ile19–Ser54 are disordered. Basic residues predominate over residues His26–His35.

This is an uncharacterized protein from Saccharomyces cerevisiae (strain ATCC 204508 / S288c) (Baker's yeast).